Here is a 245-residue protein sequence, read N- to C-terminus: 1-(5-phosphoribosyl)-5-[(5-phosphoribosylamino)methylideneamino] imidazole-4-carboxamide isomerase (245 aa).

The active-site Proton acceptor is Asp8. Residue Asp130 is the Proton donor of the active site.

It belongs to the HisA/HisF family.

The protein resides in the cytoplasm. The catalysed reaction is 1-(5-phospho-beta-D-ribosyl)-5-[(5-phospho-beta-D-ribosylamino)methylideneamino]imidazole-4-carboxamide = 5-[(5-phospho-1-deoxy-D-ribulos-1-ylimino)methylamino]-1-(5-phospho-beta-D-ribosyl)imidazole-4-carboxamide. It participates in amino-acid biosynthesis; L-histidine biosynthesis; L-histidine from 5-phospho-alpha-D-ribose 1-diphosphate: step 4/9. In Ectopseudomonas mendocina (strain ymp) (Pseudomonas mendocina), this protein is 1-(5-phosphoribosyl)-5-[(5-phosphoribosylamino)methylideneamino] imidazole-4-carboxamide isomerase.